The following is a 172-amino-acid chain: Peptidyl-prolyl cis-trans isomerase (172 aa).

The PPIase cyclophilin-type domain maps to 10 to 168; sequence YFDVYANEES…YRIEIRDCGV (159 aa).

This sequence belongs to the cyclophilin-type PPIase family.

It is found in the cytoplasm. It carries out the reaction [protein]-peptidylproline (omega=180) = [protein]-peptidylproline (omega=0). Functionally, PPIases accelerate the folding of proteins. They catalyze the cis-trans isomerization of proline imidic peptide bonds in oligopeptides. In Encephalitozoon cuniculi (strain GB-M1) (Microsporidian parasite), this protein is Peptidyl-prolyl cis-trans isomerase (CPR1).